Here is a 457-residue protein sequence, read N- to C-terminus: Amidophosphoribosyltransferase (457 aa).

The Nucleophile role is filled by Cys2. One can recognise a Glutamine amidotransferase type-2 domain in the interval 2–223 (CGVVGIYHPD…PGKAAIIKDG (222 aa)). Cys239 serves as a coordination point for [4Fe-4S] cluster. Mg(2+) is bound by residues Ser286, Asp348, and Asp349. The [4Fe-4S] cluster site is built by Cys385, Cys438, and Cys441.

It in the C-terminal section; belongs to the purine/pyrimidine phosphoribosyltransferase family. Requires Mg(2+) as cofactor. [4Fe-4S] cluster serves as cofactor.

It carries out the reaction 5-phospho-beta-D-ribosylamine + L-glutamate + diphosphate = 5-phospho-alpha-D-ribose 1-diphosphate + L-glutamine + H2O. It functions in the pathway purine metabolism; IMP biosynthesis via de novo pathway; N(1)-(5-phospho-D-ribosyl)glycinamide from 5-phospho-alpha-D-ribose 1-diphosphate: step 1/2. Catalyzes the formation of phosphoribosylamine from phosphoribosylpyrophosphate (PRPP) and glutamine. The sequence is that of Amidophosphoribosyltransferase from Archaeoglobus fulgidus (strain ATCC 49558 / DSM 4304 / JCM 9628 / NBRC 100126 / VC-16).